A 230-amino-acid chain; its full sequence is 5'-methylthioadenosine/S-adenosylhomocysteine nucleosidase (230 aa).

Catalysis depends on E12, which acts as the Proton acceptor. Substrate contacts are provided by residues G78, I153, and 174–175; that span reads ME. D198 acts as the Proton donor in catalysis.

The protein belongs to the PNP/UDP phosphorylase family. MtnN subfamily.

The catalysed reaction is S-adenosyl-L-homocysteine + H2O = S-(5-deoxy-D-ribos-5-yl)-L-homocysteine + adenine. It catalyses the reaction S-methyl-5'-thioadenosine + H2O = 5-(methylsulfanyl)-D-ribose + adenine. The enzyme catalyses 5'-deoxyadenosine + H2O = 5-deoxy-D-ribose + adenine. It functions in the pathway amino-acid biosynthesis; L-methionine biosynthesis via salvage pathway; S-methyl-5-thio-alpha-D-ribose 1-phosphate from S-methyl-5'-thioadenosine (hydrolase route): step 1/2. In terms of biological role, catalyzes the irreversible cleavage of the glycosidic bond in both 5'-methylthioadenosine (MTA) and S-adenosylhomocysteine (SAH/AdoHcy) to adenine and the corresponding thioribose, 5'-methylthioribose and S-ribosylhomocysteine, respectively. Also cleaves 5'-deoxyadenosine, a toxic by-product of radical S-adenosylmethionine (SAM) enzymes, into 5-deoxyribose and adenine. This chain is 5'-methylthioadenosine/S-adenosylhomocysteine nucleosidase, found in Shewanella frigidimarina (strain NCIMB 400).